The following is a 323-amino-acid chain: Annexin A3 (323 aa).

Ala-2 carries the N-acetylalanine modification. Annexin repeat units follow at residues 18 to 89, 90 to 161, 173 to 245, and 249 to 320; these read FSPS…ALVT, APAL…TLAD, HLAK…AIVH, and NTPA…KICG. Lys-177 bears the N6-acetyllysine mark. Phosphothreonine is present on Thr-267.

This sequence belongs to the annexin family.

Inhibitor of phospholipase A2, also possesses anti-coagulant properties. This chain is Annexin A3 (Anxa3), found in Mus musculus (Mouse).